The following is an 81-amino-acid chain: Photosystem I iron-sulfur center (81 aa).

4Fe-4S ferredoxin-type domains are found at residues 2-31 and 39-68; these read SHSV…MIPW and IASA…VRVY. Positions 11, 14, 17, 21, 48, 51, 54, and 58 each coordinate [4Fe-4S] cluster.

In terms of assembly, the eukaryotic PSI reaction center is composed of at least 11 subunits. The cofactor is [4Fe-4S] cluster.

Its subcellular location is the plastid thylakoid membrane. The enzyme catalyses reduced [plastocyanin] + hnu + oxidized [2Fe-2S]-[ferredoxin] = oxidized [plastocyanin] + reduced [2Fe-2S]-[ferredoxin]. Its function is as follows. Apoprotein for the two 4Fe-4S centers FA and FB of photosystem I (PSI); essential for photochemical activity. FB is the terminal electron acceptor of PSI, donating electrons to ferredoxin. The C-terminus interacts with PsaA/B/D and helps assemble the protein into the PSI complex. Required for binding of PsaD and PsaE to PSI. PSI is a plastocyanin-ferredoxin oxidoreductase, converting photonic excitation into a charge separation, which transfers an electron from the donor P700 chlorophyll pair to the spectroscopically characterized acceptors A0, A1, FX, FA and FB in turn. This Cuscuta reflexa (Southern Asian dodder) protein is Photosystem I iron-sulfur center.